The chain runs to 760 residues: Transglutaminase-activating metalloprotease (760 aa).

An N-terminal signal peptide occupies residues 1 to 33; the sequence is MRPTPQRRAVATGALVAVTAMLAVGVQTTSANA. Disordered regions lie at residues 32 to 59 and 228 to 265; these read NAGQ…PVKL and KQGT…KTYN. Positions 34–229 are excised as a propeptide; the sequence is GQDKAAHPAP…KLFEFQGVKQ (196 aa). A compositionally biased stretch (polar residues) spans 228 to 257; that stretch reads KQGTGNSQHSGQVQIGTTKSGSSYQMNDTT. His-366 provides a ligand contact to Zn(2+). Residue Glu-367 is part of the active site. Zn(2+) contacts are provided by His-370 and Glu-390. The active-site Proton donor is the His-454. Positions 640–760 constitute a P/Homo B domain; the sequence is TVNTTGGGSV…GTIDKWRLTF (121 aa).

It belongs to the peptidase M4 family. Zn(2+) serves as cofactor.

The protein resides in the secreted. Functionally, cleaves the N-terminal propeptide of transglutaminase thus activating it. This chain is Transglutaminase-activating metalloprotease, found in Streptomyces mobaraensis (Streptoverticillium mobaraense).